Consider the following 217-residue polypeptide: Protein OPI10 homolog (217 aa).

This sequence belongs to the OPI10 family.

The polypeptide is Protein OPI10 homolog (Dictyostelium discoideum (Social amoeba)).